The sequence spans 394 residues: Outer membrane protein S1 (394 aa).

The N-terminal stretch at 1 to 21 (MNRKVLALLVPALLVAGAANA) is a signal peptide. Residues 222-242 (SSSDRSDNQVARGYGDGMNER) form a disordered region.

Belongs to the Gram-negative porin family. Homotrimer.

It is found in the cell outer membrane. Functionally, forms pores that allow passive diffusion of small molecules across the outer membrane. The protein is Outer membrane protein S1 (ompS1) of Salmonella typhi.